The following is a 190-amino-acid chain: MYEVRFHGRGGQGSVMASGMLAAAMVEEGKYAVSIPSFGFERRGAPVVSFLRMSDREIRQLTNIYQPDCIVCVDPTLTKSVDIFAGMKAGGTLVQATHHPLSELALPDCVSTVGLLDAVKIALEIFKRPITNTLMLGAFAKTTGVVSLESLKRALEDSEFRDAGLAQNMTALERGYAEVAVHHIERRAAA.

Dimer of heteropentamers composed of an alpha (PadG), a beta (PadI), a gamma (PadE), a delta (PadF) and an epsilon (PadH) subunit.

It carries out the reaction phenylglyoxylate + NAD(+) + CoA = benzoyl-CoA + CO2 + NADH. With respect to regulation, activated by magnesium ions and thiamine diphosphate. Its function is as follows. Involved in the anaerobic metabolism of phenylalanine and phenylacetate. Catalyzes the oxidative decarboxylation of phenylglyoxylate to benzoyl-CoA and CO(2). It can also react slowly with 2-oxo-3-methylbutanoate and use different electron acceptors such as benzyl viologen, methyl viologen, FAD or FMN, but NAD seems to be the physiological electron acceptor. Also catalyzes an isotope exchange between CO(2) and the carboxyl group which proves partial or complete reversibility of the oxidative decarboxylation reaction. In Aromatoleum evansii (Azoarcus evansii), this protein is NADH-dependent phenylglyoxylate dehydrogenase subunit gamma (padE).